The following is a 200-amino-acid chain: MEPVLVYNRRDIFTKSNLNKLRKEGYIPAVAYGDDIKSLPGYVSKKEFEKLYHQKGLAGKIKISIDGKERTALIKEVQTHYTKGNIIHVDFQILSENKPIYVEVPIIFENAEILKSRGLVLQRQMDTVEIEGLPKDIPEHLVIDLMAYEKPTAIKLKDIKLPEGIKITEDLDEVVAVIDVSEITEEPEVEEKKEETSSNA.

It belongs to the bacterial ribosomal protein bL25 family. CTC subfamily. In terms of assembly, part of the 50S ribosomal subunit; part of the 5S rRNA/L5/L18/L25 subcomplex. Contacts the 5S rRNA. Binds to the 5S rRNA independently of L5 and L18.

Functionally, this is one of the proteins that binds to the 5S RNA in the ribosome where it forms part of the central protuberance. This chain is Large ribosomal subunit protein bL25, found in Caldicellulosiruptor bescii (strain ATCC BAA-1888 / DSM 6725 / KCTC 15123 / Z-1320) (Anaerocellum thermophilum).